The sequence spans 211 residues: Bcl-2-related ovarian killer protein homolog B (211 aa).

Residues 32-44 carry the BH4 motif; sequence KELCRDFIHSRIT. Residues 67–83 carry the BH3 motif; that stretch reads VSVVLLKLGDELECMRP. A BH1 motif is present at residues 113 to 132; it reads EVIAMGITWGKVVAIYAVAA. Residues 165–179 carry the BH2 motif; that stretch reads WLKKRGGWVDILKCV. A helical transmembrane segment spans residues 190–210; that stretch reads WLSTAVLTWREFIKTMYVYLT.

It belongs to the Bcl-2 family. In terms of tissue distribution, expressed strongly in ovary and more weakly in eye. Little expression in other tissues examined.

Its subcellular location is the membrane. Functionally, may play a role in apoptosis. Does not appear to show pro-apoptotic activity when expressed ectopically in early embryos. The polypeptide is Bcl-2-related ovarian killer protein homolog B (bokb) (Danio rerio (Zebrafish)).